Reading from the N-terminus, the 75-residue chain is UPF0352 protein YPTB1297 (75 aa).

It belongs to the UPF0352 family.

This chain is UPF0352 protein YPTB1297, found in Yersinia pseudotuberculosis serotype I (strain IP32953).